Reading from the N-terminus, the 803-residue chain is Rho guanine nucleotide exchange factor 7 (803 aa).

Methionine 1 is modified (N-acetylmethionine). The 133-residue stretch at 1–133 folds into the Calponin-homology (CH) domain; that stretch reads MNSAEQTVTW…SLVTLNKVTA (133 aa). Asparagine 2 is subject to N-acetylthreonine. 2 positions are modified to phosphoserine: serine 153 and serine 176. The SH3 domain occupies 184–243; it reads NNQLVVRAKFNFQQTNEDELSFSKGDVIHVTRVEEGGWWEGTLNGRTGWFPSNYVREVKA. Serine 249 and serine 257 each carry phosphoserine. The DH domain occupies 271 to 451; it reads YYNVVLQNIL…KNLSAQCQEV (181 aa). Residues 473-578 enclose the PH domain; that stretch reads DIKTLGNVTY…WVEHLQKQTK (106 aa). 3 positions are modified to phosphoserine: serine 518, cysteine 560, and valine 579. Residues 580 to 655 form a disordered region; it reads TSVGNPTIKP…TPKPWSLSCL (76 aa). Residues 593-606 are compositionally biased toward polar residues; it reads PSHTLPSHPVTPSS. A phosphoserine mark is found at lysine 645 and serine 664. The segment covering 678 to 690 has biased composition (basic residues); that stretch reads KTMKKLLPKRKPE. 2 disordered regions span residues 678–704 and 748–773; these read KTMKKLLPKRKPERKPSDEEFASRKST and DDQPSLDSLGRRSSLSRLEPSDLSED. Residues 691–700 show a composition bias toward basic and acidic residues; that stretch reads RKPSDEEFAS. A Phosphoserine; by CaMK1 modification is found at serine 694. The span at 752 to 765 shows a compositional bias: low complexity; it reads SLDSLGRRSSLSRL.

In terms of assembly, interacts with PAK kinases through the SH3 domain. Interacts with GIT1 and TGFB1I1. Interacts with PTK2/FAK1 and RAC1. Interacts with ITCH and PARVB. Interacts with unphosphorylated PAK1. Interacts with SCRIB; interaction is direct and may play a role in regulation of apoptosis. Interacts with FRMPD4 (via N-terminus). Interacts with CaMK1. Interacts with BIN2. Interacts with YWHAZ. Interacts (via PH domain) with NOX1 (via FAD-binding FR-type domain). Interacts with SNX27. Post-translationally, phosphorylated by PTK2/FAK1; this promotes interaction with RAC1. Phosphorylated on Ser-694 by CaMK1; enhancement of GEF activity and downstream activation of RAC1.

It is found in the cell junction. Its subcellular location is the focal adhesion. The protein localises to the cell projection. It localises to the ruffle. The protein resides in the cytoplasm. It is found in the cell cortex. Its subcellular location is the lamellipodium. Functionally, acts as a RAC1 guanine nucleotide exchange factor (GEF) and can induce membrane ruffling. Functions in cell migration, attachment and cell spreading. Promotes targeting of RAC1 to focal adhesions. May function as a positive regulator of apoptosis. Downstream of NMDA receptors and CaMKK-CaMK1 signaling cascade, promotes the formation of spines and synapses in hippocampal neurons. The polypeptide is Rho guanine nucleotide exchange factor 7 (ARHGEF7) (Homo sapiens (Human)).